The chain runs to 615 residues: Neurosecretory protein VGF (615 aa).

The signal sequence occupies residues 1–22 (MKALRLSASALFCLLLINGLGA). Disordered regions lie at residues 22 to 201 (AAPP…ESPG) and 218 to 257 (PERA…PKTH). Composition is skewed to pro residues over residues 25-35 (PGRPEAQPPPL) and 129-141 (PESP…PRPQ). Residues 179–194 (ETAAAETETRTHTLTR) are compositionally biased toward low complexity. Q310 carries the post-translational modification Pyrrolidone carboxylic acid. Positions 342–600 (RQRGLGGRGL…EAEERRLQEQ (259 aa)) are disordered. Residues 378 to 394 (VGEEDEEAAEAEAEAEE) show a composition bias toward acidic residues. Basic and acidic residues predominate over residues 415–433 (AEDKRSQEETPGHRRKEAE). S420 carries the post-translational modification Phosphoserine; by FAM20C. T424 bears the Phosphothreonine; by FAM20C mark. A compositionally biased stretch (acidic residues) spans 434-448 (GTEEGGEEEDDEEMD). Residues 487–497 (PPEPVPPPRAA) show a composition bias toward pro residues. P577 is subject to Proline amide. Positions 577 to 599 (PGREAQARRAQEEAEAEERRLQE) are enriched in basic and acidic residues.

In terms of assembly, interacts with HSPA8 on cell membrane. Interacts with C3AR1. Interacts with C1QBP. In terms of processing, multiple peptides are derived from VGF, with activities in synaptic plasticity, antidepression, penile erection, autonomic activation, and increases in energy expenditure. Central and peripheral nervous systems, synthesized exclusively in neuronal and neuroendocrine cells.

It localises to the secreted. The protein resides in the cytoplasmic vesicle. The protein localises to the secretory vesicle. In terms of biological role, secreted polyprotein that is packaged and proteolytically processed by prohormone convertases PCSK1 and PCSK2 in a cell-type-specific manner. VGF and peptides derived from its processing play many roles in neurogenesis and neuroplasticity associated with learning, memory, depression and chronic pain. Plays a role in the control of body fluid homeostasis by regulating vasopressin release. Suppresses presynaptic glutamatergic neurons connected to vasopressin neurons. Functionally, plays a role in the control of body fluid homeostasis by regulating vasopressin release. Activates GABAergic interneurons which are inhibitory neurons of the nervous system and thereby suppresses presynaptic glutamatergic neurons. Also stimulates feeding behavior in an orexin-dependent manner in the hypothalamus. Functions as a positive regulator for the activation of orexin neurons resulting in elevated gastric acid secretion and gastric emptying. Its function is as follows. Secreted multifunctional neuropeptide that binds to different cell receptors and thereby plays multiple physiological roles including modulation of energy expenditure, pain, response to stress, gastric regulation, glucose homeostasis as well as lipolysis. Activates the G-protein-coupled receptor C3AR1 via a folding-upon-binding mechanism leading to enhanced lipolysis in adipocytes. Interacts with C1QBP receptor in macrophages and microglia causing increased levels of intracellular calcium and hypersensitivity. In terms of biological role, plays a role in the regulation of memory formation and depression-related behaviors potentially by influencing synaptic plasticity and neurogenesis. Induces acute and transient activation of the NTRK2/TRKB receptor and subsequent CREB phosphorylation. Also induces insulin secretion in insulinoma cells by increasing intracellular calcium mobilization. Has bactericidal activity against M.luteus, and antifungal activity against P. Pastoris. This Homo sapiens (Human) protein is Neurosecretory protein VGF (VGF).